A 404-amino-acid chain; its full sequence is Iron-sulfur assembly protein IscA2 (404 aa).

Positions 244 to 289 form a coiled coil; that stretch reads KEEDEKKLDKLLKKRNIKKRDIVTITEEAKEELKKIISINKKENNN.

Belongs to the HesB/IscA family. In terms of assembly, dimer. Homotetramer. Interacts with ABCB6.

The protein localises to the mitochondrion. Its pathway is cofactor biosynthesis; iron-sulfur cluster biosynthesis. Functionally, participates in iron-sulfur cluster formation (ISC) pathway for iron-sulfur (Fe-S) cluster biogenesis. Can bind and transfer [4Fe-4S] clusters to target apo-proteins. The protein is Iron-sulfur assembly protein IscA2 of Plasmodium falciparum (isolate 3D7).